The chain runs to 104 residues: Large ribosomal subunit protein bL21 (104 aa).

The protein belongs to the bacterial ribosomal protein bL21 family. As to quaternary structure, part of the 50S ribosomal subunit. Contacts protein L20.

In terms of biological role, this protein binds to 23S rRNA in the presence of protein L20. In Moorella thermoacetica (strain ATCC 39073 / JCM 9320), this protein is Large ribosomal subunit protein bL21.